The following is a 163-amino-acid chain: Nucleotide-binding protein ECA1137 (163 aa).

It belongs to the YajQ family.

Nucleotide-binding protein. This chain is Nucleotide-binding protein ECA1137, found in Pectobacterium atrosepticum (strain SCRI 1043 / ATCC BAA-672) (Erwinia carotovora subsp. atroseptica).